Reading from the N-terminus, the 422-residue chain is MGNWNKYIPKGMKDILFEESNIKLDIEDQLRKIYKYSGFSEIISPTIEFYDVFNSNIQAIPQEKMYKLFDNLGRILVLRPDMTTPIGRITGTKMKDCTYPLKLCYTANIFRVNEKLNGKRGEITQSGIEIIGTKGIKSDVDSIVTAINALLSLGLRNFKIELGEAGLFEALTENMRIEEENLKKLKEIIRNKNYVALKKFLDEISLKYSKEDFEIIENLPKLFGDIEIIEKAKALTKNEKALKSLNDIYNIYKSIEDIGLGSYISIDLGMVQNIDYYTGVIFKGYVEEVGDSILSGGRYDNLIQHFGIELPATGFAINVDDIMIALKKQNTMSMDKDKKVLIFYKEEFLRKAYDFMQELKMKKIICELSLLDEDKEILLYSKKKGIDFIIGFTREEKLFVKDLKSDKIAFLEKNEIEDLLMV.

Belongs to the class-II aminoacyl-tRNA synthetase family. HisZ subfamily. As to quaternary structure, heteromultimer composed of HisG and HisZ subunits.

The protein localises to the cytoplasm. Its pathway is amino-acid biosynthesis; L-histidine biosynthesis; L-histidine from 5-phospho-alpha-D-ribose 1-diphosphate: step 1/9. Functionally, required for the first step of histidine biosynthesis. May allow the feedback regulation of ATP phosphoribosyltransferase activity by histidine. This is ATP phosphoribosyltransferase regulatory subunit from Clostridium botulinum (strain 657 / Type Ba4).